The primary structure comprises 218 residues: Protein P9 (218 aa).

It localises to the virion membrane. The polypeptide is Protein P9 (IX) (Pseudoalteromonas espejiana (Bacteriophage PM2)).